The sequence spans 124 residues: Small ribosomal subunit protein uS13 (124 aa).

Residues Lys-93–Ala-117 are compositionally biased toward basic residues. Residues Lys-93–Lys-124 form a disordered region.

The protein belongs to the universal ribosomal protein uS13 family. Part of the 30S ribosomal subunit. Forms a loose heterodimer with protein S19. Forms two bridges to the 50S subunit in the 70S ribosome.

Located at the top of the head of the 30S subunit, it contacts several helices of the 16S rRNA. In the 70S ribosome it contacts the 23S rRNA (bridge B1a) and protein L5 of the 50S subunit (bridge B1b), connecting the 2 subunits; these bridges are implicated in subunit movement. Contacts the tRNAs in the A and P-sites. This chain is Small ribosomal subunit protein uS13, found in Mycoplasma genitalium (strain ATCC 33530 / DSM 19775 / NCTC 10195 / G37) (Mycoplasmoides genitalium).